The following is a 187-amino-acid chain: Elongation factor P (187 aa).

The protein belongs to the elongation factor P family.

Its subcellular location is the cytoplasm. Its pathway is protein biosynthesis; polypeptide chain elongation. In terms of biological role, involved in peptide bond synthesis. Stimulates efficient translation and peptide-bond synthesis on native or reconstituted 70S ribosomes in vitro. Probably functions indirectly by altering the affinity of the ribosome for aminoacyl-tRNA, thus increasing their reactivity as acceptors for peptidyl transferase. This chain is Elongation factor P, found in Synechococcus sp. (strain CC9311).